Here is a 119-residue protein sequence, read N- to C-terminus: Large ribosomal subunit protein bL20 (119 aa).

Belongs to the bacterial ribosomal protein bL20 family.

Binds directly to 23S ribosomal RNA and is necessary for the in vitro assembly process of the 50S ribosomal subunit. It is not involved in the protein synthesizing functions of that subunit. The protein is Large ribosomal subunit protein bL20 of Shewanella frigidimarina (strain NCIMB 400).